A 332-amino-acid chain; its full sequence is Methionine synthase (332 aa).

The Zn(2+) site is built by His211, Cys213, and Cys296.

It belongs to the archaeal MetE family. Zn(2+) serves as cofactor.

It participates in amino-acid biosynthesis; L-methionine biosynthesis via de novo pathway. Catalyzes the transfer of a methyl group to L-homocysteine resulting in methionine formation. The physiological methyl donor is unknown. The protein is Methionine synthase of Saccharolobus islandicus (strain Y.N.15.51 / Yellowstone #2) (Sulfolobus islandicus).